The primary structure comprises 167 residues: Alanine- and arginine-rich domain-containing protein (167 aa).

Residues 140–167 form a disordered region; it reads LKKRQDQELASKPQSPQDKEMNSECGSA.

In terms of tissue distribution, preferentially expressed in testis both in embryo and adult. Expressed at much lower level in other tissues.

The polypeptide is Alanine- and arginine-rich domain-containing protein (Aard) (Mus musculus (Mouse)).